The sequence spans 516 residues: Na(+)/H(+) antiporter NhaB (516 aa).

Helical transmembrane passes span 23 to 43 (LALI…PFVA), 61 to 80 (CYPL…IGMT), 97 to 117 (LLLM…LFVF), 120 to 140 (LLLG…AAAF), 144 to 164 (FLDA…FYGI), 202 to 222 (LMMH…VGEP), 238 to 258 (FFLR…LTCL), 303 to 323 (ALIG…VGLI), 348 to 368 (TEAL…AVII), 391 to 411 (LFYL…VGTV), 447 to 467 (ATPN…APLI), and 475 to 495 (VWMA…CVEF).

Belongs to the NhaB Na(+)/H(+) (TC 2.A.34) antiporter family.

The protein resides in the cell inner membrane. The enzyme catalyses 2 Na(+)(in) + 3 H(+)(out) = 2 Na(+)(out) + 3 H(+)(in). Its function is as follows. Na(+)/H(+) antiporter that extrudes sodium in exchange for external protons. This chain is Na(+)/H(+) antiporter NhaB, found in Klebsiella pneumoniae subsp. pneumoniae (strain ATCC 700721 / MGH 78578).